Consider the following 235-residue polypeptide: tRNA1(Val) (adenine(37)-N6)-methyltransferase (235 aa).

This sequence belongs to the methyltransferase superfamily. tRNA (adenine-N(6)-)-methyltransferase family.

It is found in the cytoplasm. It carries out the reaction adenosine(37) in tRNA1(Val) + S-adenosyl-L-methionine = N(6)-methyladenosine(37) in tRNA1(Val) + S-adenosyl-L-homocysteine + H(+). Its function is as follows. Specifically methylates the adenine in position 37 of tRNA(1)(Val) (anticodon cmo5UAC). This chain is tRNA1(Val) (adenine(37)-N6)-methyltransferase, found in Glaesserella parasuis serovar 5 (strain SH0165) (Haemophilus parasuis).